The following is a 316-amino-acid chain: Transaldolase (316 aa).

The active-site Schiff-base intermediate with substrate is the Lys132.

This sequence belongs to the transaldolase family. Type 1 subfamily. Homodimer.

It localises to the cytoplasm. The enzyme catalyses D-sedoheptulose 7-phosphate + D-glyceraldehyde 3-phosphate = D-erythrose 4-phosphate + beta-D-fructose 6-phosphate. Its pathway is carbohydrate degradation; pentose phosphate pathway; D-glyceraldehyde 3-phosphate and beta-D-fructose 6-phosphate from D-ribose 5-phosphate and D-xylulose 5-phosphate (non-oxidative stage): step 2/3. Transaldolase is important for the balance of metabolites in the pentose-phosphate pathway. The chain is Transaldolase from Aliivibrio fischeri (strain ATCC 700601 / ES114) (Vibrio fischeri).